The primary structure comprises 295 residues: 4-hydroxy-tetrahydrodipicolinate synthase (295 aa).

Thr-48 contacts pyruvate. Residue Tyr-136 is the Proton donor/acceptor of the active site. Lys-164 (schiff-base intermediate with substrate) is an active-site residue. Ile-206 provides a ligand contact to pyruvate.

The protein belongs to the DapA family. Homotetramer; dimer of dimers.

The protein resides in the cytoplasm. It carries out the reaction L-aspartate 4-semialdehyde + pyruvate = (2S,4S)-4-hydroxy-2,3,4,5-tetrahydrodipicolinate + H2O + H(+). Its pathway is amino-acid biosynthesis; L-lysine biosynthesis via DAP pathway; (S)-tetrahydrodipicolinate from L-aspartate: step 3/4. Its function is as follows. Catalyzes the condensation of (S)-aspartate-beta-semialdehyde [(S)-ASA] and pyruvate to 4-hydroxy-tetrahydrodipicolinate (HTPA). The protein is 4-hydroxy-tetrahydrodipicolinate synthase of Actinobacillus pleuropneumoniae serotype 5b (strain L20).